We begin with the raw amino-acid sequence, 1357 residues long: DNA-directed RNA polymerase subunit beta (1357 aa).

It belongs to the RNA polymerase beta chain family. As to quaternary structure, the RNAP catalytic core consists of 2 alpha, 1 beta, 1 beta' and 1 omega subunit. When a sigma factor is associated with the core the holoenzyme is formed, which can initiate transcription.

It catalyses the reaction RNA(n) + a ribonucleoside 5'-triphosphate = RNA(n+1) + diphosphate. In terms of biological role, DNA-dependent RNA polymerase catalyzes the transcription of DNA into RNA using the four ribonucleoside triphosphates as substrates. The sequence is that of DNA-directed RNA polymerase subunit beta from Pseudomonas fluorescens (strain SBW25).